We begin with the raw amino-acid sequence, 148 residues long: Protein H2A.6 (148 aa).

Residues 120-148 (GAAEKESTKSPKKKAATKSPKKKTAATKE) form a disordered region. Short sequence motifs (SPKK motif) lie at residues 129 to 132 (SPKK) and 138 to 141 (SPKK). The segment covering 129–148 (SPKKKAATKSPKKKTAATKE) has biased composition (basic residues).

Belongs to the histone H2A family. The nucleosome is a histone octamer containing two molecules each of H2A, H2B, H3 and H4 assembled in one H3-H4 heterotetramer and two H2A-H2B heterodimers. The octamer wraps approximately 147 bp of DNA. Abundant in meristematic tissues.

It localises to the nucleus. The protein localises to the chromosome. Core component of nucleosome. Nucleosomes wrap and compact DNA into chromatin, limiting DNA accessibility to the cellular machineries which require DNA as a template. Histones thereby play a central role in transcription regulation, DNA repair, DNA replication and chromosomal stability. DNA accessibility is regulated via a complex set of post-translational modifications of histones, also called histone code, and nucleosome remodeling. The protein is Protein H2A.6 (H2A-3) of Triticum aestivum (Wheat).